Reading from the N-terminus, the 465-residue chain is Kynureninase (465 aa).

Pyridoxal 5'-phosphate is bound by residues Leu-133, Thr-134, 161-164 (FPSD), Ser-217, Asp-246, His-249, and Tyr-271. Lys-272 carries the post-translational modification N6-(pyridoxal phosphate)lysine. 2 residues coordinate pyridoxal 5'-phosphate: Trp-302 and Asn-330.

This sequence belongs to the kynureninase family. As to quaternary structure, homodimer. It depends on pyridoxal 5'-phosphate as a cofactor.

The protein resides in the cytoplasm. It catalyses the reaction L-kynurenine + H2O = anthranilate + L-alanine + H(+). The catalysed reaction is 3-hydroxy-L-kynurenine + H2O = 3-hydroxyanthranilate + L-alanine + H(+). Its pathway is amino-acid degradation; L-kynurenine degradation; L-alanine and anthranilate from L-kynurenine: step 1/1. It functions in the pathway cofactor biosynthesis; NAD(+) biosynthesis; quinolinate from L-kynurenine: step 2/3. In terms of biological role, catalyzes the cleavage of L-kynurenine (L-Kyn) and L-3-hydroxykynurenine (L-3OHKyn) into anthranilic acid (AA) and 3-hydroxyanthranilic acid (3-OHAA), respectively. The sequence is that of Kynureninase from Nematostella vectensis (Starlet sea anemone).